A 442-amino-acid chain; its full sequence is uncharacterized protein (442 aa).

7 consecutive transmembrane segments (helical) span residues 209–229 (FNIW…AYFY), 247–267 (IFFL…HTFS), 284–304 (VGIS…AFVC), 308–328 (LRFI…YTPW), 342–362 (IFFF…MFYI), 374–394 (PVFK…LHIP), and 402–422 (FDII…GVAF).

It localises to the membrane. This is an uncharacterized protein from Schizosaccharomyces pombe (strain 972 / ATCC 24843) (Fission yeast).